A 312-amino-acid chain; its full sequence is Type II methyltransferase M.NgoMIV (312 aa).

Residues 3–311 (FTSLEICAGA…RQIIKALKKE (309 aa)) form the SAM-dependent MTase C5-type domain. Residue Cys-74 is part of the active site.

It belongs to the class I-like SAM-binding methyltransferase superfamily. C5-methyltransferase family.

The enzyme catalyses a 2'-deoxycytidine in DNA + S-adenosyl-L-methionine = a 5-methyl-2'-deoxycytidine in DNA + S-adenosyl-L-homocysteine + H(+). A methylase, recognizes the double-stranded sequence 5'-GCCGGC-3', methylates C-2 on both strands, and protects the DNA from cleavage by the NgoMIV endonuclease. The protein is Type II methyltransferase M.NgoMIV (ngoMIVM) of Neisseria gonorrhoeae.